The following is a 98-amino-acid chain: Protein E7 (98 aa).

The interval 1–42 (MHGRLVTLKDIVLDLQPPDPVGLHCYEQLEDSSEDEVDKVDK) is E7 terminal domain. The short motif at 23–27 (LHCYE) is the LXCXE motif; interaction with host RB1 and TMEM173/STING element. The segment at 58-94 (CCGCDSNVRLVVECTDGDIRQLQDLLLGTLNIVCPIC) is a zinc-finger region. A Nuclear export signal motif is present at residues 76-84 (IRQLQDLLL).

It belongs to the papillomaviridae E7 protein family. As to quaternary structure, homodimer. Homooligomer. Interacts with host RB1; this interaction induces dissociation of RB1-E2F1 complex thereby disrupting RB1 activity. Interacts with host EP300; this interaction represses EP300 transcriptional activity. Interacts with protein E2; this interaction inhibits E7 oncogenic activity. Interacts with host TMEM173/STING; this interaction impairs the ability of TMEM173/STING to sense cytosolic DNA and promote the production of type I interferon (IFN-alpha and IFN-beta). Interacts with host ZUBR1. Highly phosphorylated.

It is found in the host cytoplasm. The protein localises to the host nucleus. Functionally, plays a role in viral genome replication by driving entry of quiescent cells into the cell cycle. Stimulation of progression from G1 to S phase allows the virus to efficiently use the cellular DNA replicating machinery to achieve viral genome replication. E7 protein has both transforming and trans-activating activities. Induces the disassembly of the E2F1 transcription factor from RB1, with subsequent transcriptional activation of E2F1-regulated S-phase genes. Interferes with host histone deacetylation mediated by HDAC1 and HDAC2, leading to transcription activation. Also plays a role in the inhibition of both antiviral and antiproliferative functions of host interferon alpha. Interaction with host TMEM173/STING impairs the ability of TMEM173/STING to sense cytosolic DNA and promote the production of type I interferon (IFN-alpha and IFN-beta). The polypeptide is Protein E7 (Homo sapiens (Human)).